A 439-amino-acid chain; its full sequence is Aspartate--tRNA(Asp/Asn) ligase (439 aa).

Glu177 serves as a coordination point for L-aspartate. Residues 199–202 (QLYK) are aspartate. An L-aspartate-binding site is contributed by Arg221. ATP contacts are provided by residues 221–223 (RAE), 229–231 (RHL), and Glu362. Glu362 and Ser365 together coordinate Mg(2+). L-aspartate is bound by residues Ser365 and Arg369. 410 to 413 (GADR) contacts ATP.

It belongs to the class-II aminoacyl-tRNA synthetase family. Type 2 subfamily. Homodimer. Mg(2+) serves as cofactor.

The protein resides in the cytoplasm. It catalyses the reaction tRNA(Asx) + L-aspartate + ATP = L-aspartyl-tRNA(Asx) + AMP + diphosphate. Aspartyl-tRNA synthetase with relaxed tRNA specificity since it is able to aspartylate not only its cognate tRNA(Asp) but also tRNA(Asn). Reaction proceeds in two steps: L-aspartate is first activated by ATP to form Asp-AMP and then transferred to the acceptor end of tRNA(Asp/Asn). The sequence is that of Aspartate--tRNA(Asp/Asn) ligase from Methanosphaera stadtmanae (strain ATCC 43021 / DSM 3091 / JCM 11832 / MCB-3).